Reading from the N-terminus, the 477-residue chain is Homeobox protein Meis2 (477 aa).

The required for interaction with PBX1 stretch occupies residues 71-191 (DALKRDKDAI…KMPIDLVIDE (121 aa)). Positions 110–193 (GGDVCSSDSF…PIDLVIDERD (84 aa)) constitute an MEIS N-terminal domain. A compositionally biased stretch (basic and acidic residues) spans 193–203 (DGSSKSDHEEL). A disordered region spans residues 193–283 (DGSSKSDHEE…KKRQKKRGIF (91 aa)). 2 stretches are compositionally biased toward polar residues: residues 204–217 (SGSSTNLADHNPSS) and 239–251 (GHASQSGDNSSEQ). Positions 276 to 338 (RQKKRGIFPK…NARRRIVQPM (63 aa)) form a DNA-binding region, homeobox; TALE-type. The segment at 299-333 (LTHPYPSEEQKKQLAQDTGLTILQVNNWFINARRR) is interaction with DNA. Residues 340 to 477 (DQSNRAGFLL…GGQVMDIHAQ (138 aa)) form a transcriptional activation domain region.

The protein belongs to the TALE/MEIS homeobox family. As to quaternary structure, monomer and homodimer. Heterodimer with HOXB13. Isoform 2 interacts with TLX1. Isoform 3 interacts with HOXA13 and PBX1 isoform PBX1b. Isoform 4 interacts with SP1, SP3 and KLF4. Isoform 4 and isoform 5 interact with PBX1 isoform PBX1a; the interaction partially relieves MEIS2 autoinhibition. Isoform 3 also known as MEIS2b is part of a PDX1:PBX1b:Meis2B complex; Meis2B is recruited by PBX1b and can be replaced by isoform 4 in a small fraction of complexes. Can form trimeric complexes including HOXB8 and PBX2 or PBX3. As to expression, expressed in various tissues. Expressed at high level in the lymphoid organs of hematopoietic tissues. Also expressed in some regions of the brain, such as the putamen.

It is found in the nucleus. It localises to the cytoplasm. Its subcellular location is the perinuclear region. Functionally, involved in transcriptional regulation. Binds to HOX or PBX proteins to form dimers, or to a DNA-bound dimer of PBX and HOX proteins and thought to have a role in stabilization of the homeoprotein-DNA complex. Isoform 3 is required for the activity of a PDX1:PBX1b:MEIS2b complex in pancreatic acinar cells involved in the transcriptional activation of the ELA1 enhancer; the complex binds to the enhancer B element and cooperates with the transcription factor 1 complex (PTF1) bound to the enhancer A element; MEIS2 is not involved in complex DNA-binding. Probably in complex with PBX1, is involved in transcriptional regulation by KLF4. Isoform 3 and isoform 4 can bind to a EPHA8 promoter sequence containing the DNA motif 5'-CGGTCA-3'; in cooperation with a PBX protein (such as PBX2) is proposed to be involved in the transcriptional activation of EPHA8 in the developing midbrain. May be involved in regulation of myeloid differentiation. Can bind to the DNA sequence 5'-TGACAG-3'in the activator ACT sequence of the D(1A) dopamine receptor (DRD1) promoter and activate DRD1 transcription; isoform 5 cannot activate DRD1 transcription. This chain is Homeobox protein Meis2 (MEIS2), found in Homo sapiens (Human).